The following is a 313-amino-acid chain: Probable cell division protein WhiA (313 aa).

Residues 277–311 constitute a DNA-binding region (H-T-H motif); sequence SLKEVAAQVPDGPISKSGVNHRFQKIREMAQQLKE.

It belongs to the WhiA family.

Involved in cell division and chromosome segregation. The sequence is that of Probable cell division protein WhiA from Lactobacillus gasseri (strain ATCC 33323 / DSM 20243 / BCRC 14619 / CIP 102991 / JCM 1131 / KCTC 3163 / NCIMB 11718 / NCTC 13722 / AM63).